The primary structure comprises 90 residues: Progonadoliberin-3 (90 aa).

A signal peptide spans Met-1–Ser-23. At Gln-24 the chain carries Pyrrolidone carboxylic acid. Gly-33 is modified (glycine amide).

The protein belongs to the GnRH family.

It is found in the secreted. Its function is as follows. Stimulates the secretion of gonadotropins. The polypeptide is Progonadoliberin-3 (gnrh3) (Pagrus major (Red sea bream)).